Here is a 202-residue protein sequence, read N- to C-terminus: LexA repressor (202 aa).

The H-T-H motif DNA-binding region spans 28-48; it reads RAEIAQQLGFRSPNAAEEHLK. Catalysis depends on for autocatalytic cleavage activity residues Ser-119 and Lys-156.

It belongs to the peptidase S24 family. Homodimer.

The catalysed reaction is Hydrolysis of Ala-|-Gly bond in repressor LexA.. Its function is as follows. Represses a number of genes involved in the response to DNA damage (SOS response), including recA and lexA. In the presence of single-stranded DNA, RecA interacts with LexA causing an autocatalytic cleavage which disrupts the DNA-binding part of LexA, leading to derepression of the SOS regulon and eventually DNA repair. The polypeptide is LexA repressor (Pectobacterium atrosepticum (strain SCRI 1043 / ATCC BAA-672) (Erwinia carotovora subsp. atroseptica)).